Reading from the N-terminus, the 335-residue chain is Ketol-acid reductoisomerase (NADP(+)) 2 (335 aa).

Residues Met-1–Thr-180 form the KARI N-terminal Rossmann domain. NADP(+) is bound by residues Tyr-24–Gln-27, Arg-47, Ser-51, and Asp-81–Gln-84. His-106 is an active-site residue. Gly-132 lines the NADP(+) pocket. The region spanning Thr-181–Ile-326 is the KARI C-terminal knotted domain. 4 residues coordinate Mg(2+): Asp-189, Glu-193, Glu-225, and Glu-229. Ser-250 provides a ligand contact to substrate.

The protein belongs to the ketol-acid reductoisomerase family. Requires Mg(2+) as cofactor.

It carries out the reaction (2R)-2,3-dihydroxy-3-methylbutanoate + NADP(+) = (2S)-2-acetolactate + NADPH + H(+). It catalyses the reaction (2R,3R)-2,3-dihydroxy-3-methylpentanoate + NADP(+) = (S)-2-ethyl-2-hydroxy-3-oxobutanoate + NADPH + H(+). It functions in the pathway amino-acid biosynthesis; L-isoleucine biosynthesis; L-isoleucine from 2-oxobutanoate: step 2/4. It participates in amino-acid biosynthesis; L-valine biosynthesis; L-valine from pyruvate: step 2/4. Its function is as follows. Involved in the biosynthesis of branched-chain amino acids (BCAA). Catalyzes an alkyl-migration followed by a ketol-acid reduction of (S)-2-acetolactate (S2AL) to yield (R)-2,3-dihydroxy-isovalerate. In the isomerase reaction, S2AL is rearranged via a Mg-dependent methyl migration to produce 3-hydroxy-3-methyl-2-ketobutyrate (HMKB). In the reductase reaction, this 2-ketoacid undergoes a metal-dependent reduction by NADPH to yield (R)-2,3-dihydroxy-isovalerate. This Bacillus anthracis protein is Ketol-acid reductoisomerase (NADP(+)) 2.